The sequence spans 585 residues: Pre-mRNA-splicing factor sap145 (585 aa).

A coiled-coil region spans residues 1 to 74 (MAEIQTAQNP…NNDNLYNDKK (74 aa)). Residues 1-84 (MAEIQTAQNP…SNGNFYDTNK (84 aa)) are disordered. The segment covering 12–22 (KELEKILERNN) has biased composition (basic and acidic residues). A compositionally biased stretch (basic residues) spans 23–41 (KQKNKKSRNQVRREKKKLL). A compositionally biased stretch (basic and acidic residues) spans 51 to 62 (LAEKNSDDKDQL). Position 145 is a phosphoserine (S145). Residues 400 to 460 (IHAGTGSPVS…SASEPRSQRE (61 aa)) form a disordered region. Residues 416-439 (LEEFEEEESSEEEESEDVEYPTEE) show a composition bias toward acidic residues.

As to quaternary structure, belongs to the 40S cdc5-associated complex (or cwf complex), a spliceosome sub-complex reminiscent of a late-stage spliceosome composed of the U2, U5 and U6 snRNAs and at least brr2, cdc5, cwf2/prp3, cwf3/syf1, cwf4/syf3, cwf5/ecm2, spp42/cwf6, cwf7/spf27, cwf8, cwf9, cwf10, cwf11, cwf12, prp45/cwf13, cwf14, cwf15, cwf16, cwf17, cwf18, cwf19, cwf20, cwf21, cwf22, cwf23, cwf24, cwf25, cwf26, cyp7/cwf27, cwf28, cwf29/ist3, lea1, msl1, prp5/cwf1, prp10/sap155, prp12/sap130, prp17, prp22, sap61, sap62, sap114, sap145, slu7, smb1, smd1, smd3, smf1, smg1 and syf2. Sap145 is part of the SF3b subcomplex of the Prp19-associated nineteen complex (NTC), composed of ini1, prp10, prp12/sap130, sap10/sap155, sap14, sap49 and sap145. Part of the U2 snRNP.

The protein localises to the nucleus. It is found in the cytoplasm. Functionally, involved in pre-mRNA splicing. May be involved in endoplasmic reticulum-associated protein degradation (ERAD) and required for growth at low and high temperatures. This chain is Pre-mRNA-splicing factor sap145 (sap145), found in Schizosaccharomyces pombe (strain 972 / ATCC 24843) (Fission yeast).